Here is a 412-residue protein sequence, read N- to C-terminus: Palmitoyl-acyl carrier protein thioesterase, chloroplastic (412 aa).

Composition is skewed to polar residues over residues 1 to 19 (MVAT…SSLD) and 27 to 40 (IGST…SAPN). The transit peptide at 1–49 (MVATSATSSFFPVPSSSLDPNGKGNKIGSTNLAGLNSAPNSGRMKVKPN) directs the protein to the chloroplast. The disordered stretch occupies residues 1-64 (MVATSATSSF…KINGKKVGLP (64 aa)). Residues asparagine 315, histidine 317, and cysteine 352 contribute to the active site.

This sequence belongs to the acyl-ACP thioesterase family. Highly expressed in flowers. Expressed in roots, leaves, stems, siliques and seeds.

It is found in the plastid. Its subcellular location is the chloroplast. It carries out the reaction hexadecanoyl-[ACP] + H2O = hexadecanoate + holo-[ACP] + H(+). Plays an essential role in chain termination during de novo fatty acid synthesis. Possesses high thioesterase activity for palmitoyl-ACP versus other acyl-ACPs. Substrate preference is 16:0 &gt; 18:1 &gt; 18:0 &gt; 16:1. Plays an essential role in the supply of saturated fatty acids necessary for plant growth and seed development. Contributes to 16:0 production particularly in flowers. May be involved in the synthesis of long chain fatty acid. In Arabidopsis thaliana (Mouse-ear cress), this protein is Palmitoyl-acyl carrier protein thioesterase, chloroplastic (FATB).